The following is a 467-amino-acid chain: Nuclear distribution protein nudF 1 (467 aa).

One can recognise a LisH domain in the interval 9–41; sequence QAEELHKSIIAYLASVNLSESATTLRAELGDAV. The stretch at 60-87 forms a coiled coil; the sequence is TSVVRLQKKIMDLESRCAALQSELDSAT. WD repeat units follow at residues 113 to 154, 156 to 196, 200 to 247, 250 to 289, 292 to 352, 354 to 393, 398 to 428, and 429 to 466; these read SHRS…RTVK, HTKA…KNIR, GHDH…CVKT, GHVDWVRAVAPSIDGRFLFAAGDDRIPRLWDLSAAETRST, GHEH…IKTL, GHDNWVRALAFHPGGKYLLSVSDDKTIRCWDLTQECKCVR, THEHFVTCLRWAPPLIKDSGANGDAGANGTP, and AATTTSNGARQDPNAANKISIRCVIATGSVDQKVRVFA. Low complexity predominate over residues 417–437; that stretch reads GANGDAGANGTPAATTTSNGA. The segment at 417–441 is disordered; sequence GANGDAGANGTPAATTTSNGARQDP.

The protein belongs to the WD repeat LIS1/nudF family. In terms of assembly, self-associates. Interacts with nudE and dynein.

It is found in the cytoplasm. The protein localises to the cytoskeleton. The protein resides in the spindle pole. Functionally, positively regulates the activity of the minus-end directed microtubule motor protein dynein. May enhance dynein-mediated microtubule sliding by targeting dynein to the microtubule plus end. Required for nuclear migration during vegetative growth as well as development. Required for retrograde early endosome (EE) transport from the hyphal tip. Required for localization of dynein to the mitotic spindle poles. Recruits additional proteins to the dynein complex at SPBs. This Aspergillus clavatus (strain ATCC 1007 / CBS 513.65 / DSM 816 / NCTC 3887 / NRRL 1 / QM 1276 / 107) protein is Nuclear distribution protein nudF 1.